Here is a 343-residue protein sequence, read N- to C-terminus: Aldehyde reductase 2 (343 aa).

Residue Tyr-177 coordinates NADP(+).

It belongs to the NAD(P)-dependent epimerase/dehydratase family. Dihydroflavonol-4-reductase subfamily. Monomer.

It catalyses the reaction a primary alcohol + NADP(+) = an aldehyde + NADPH + H(+). Inhibited by quercetin and diphenylhydantoin. Functionally, catalyzes the asymmetric reduction of o-substituted aliphatic and aromatic aldehydes and ketones to an S-enantiomer. Reduces ethyl 4-chloro-3-oxobutanoate to ethyl (S)-4-chloro-3-hydroxybutanoate. The chain is Aldehyde reductase 2 from Sporidiobolus salmonicolor (Yeast-like fungus).